A 336-amino-acid chain; its full sequence is NEDD4 family-interacting protein 2 (336 aa).

Disordered regions lie at residues 1-24 and 37-156; these read MARR…RGAP and SAAA…SITV. Residues 1-231 are Cytoplasmic-facing; it reads MARRRSQRVC…ADQLRVGNDG (231 aa). Residues 37-48 are compositionally biased toward low complexity; sequence SAAAAGATGSEE. Over residues 78-99 the composition is skewed to basic and acidic residues; that stretch reads EHGEDSLSRKPDPEPGRMDHHQ. Residues 148–151 form an interaction with NEDD4 region; that stretch reads PPPY. Positions 148-151 match the PPxY motif 1 motif; the sequence is PPPY. Tyr-151, Tyr-167, Tyr-171, and Tyr-177 each carry phosphotyrosine; by SRC. 2 consecutive short sequence motifs (PPxY motif) follow at residues 174 to 177 and 184 to 186; these read PPPY and PTY. Residues 232–252 traverse the membrane as a helical segment; the sequence is IFMLAFFMAFIFNWLGFCLSF. Over 253 to 257 the chain is Extracellular; sequence CITNT. A helical membrane pass occupies residues 258–278; the sequence is IAGRYGAICGFGLSLIKWILI. Residues 279 to 287 are Cytoplasmic-facing; it reads VRFSDYFTG. The chain crosses the membrane as a helical span at residues 288-308; it reads YFNGQYWLWWIFLVLGLLLFF. The Extracellular portion of the chain corresponds to 309 to 336; the sequence is RGFVNYLKVRNMSESMAAAHRTRYFFLL.

As to quaternary structure, forms heterodimers with NDFIP1. Interacts with HECT domain-containing E3 ubiquitin-protein ligases, including NEDD4. Interacts with NEDD4L. Interacts with PTEN. When phosphorylated at Tyr-167, interacts with SRC and LYN SH2 domain. May thus act as a scaffold that recruits SRC to NDFIP1, enhancing NDFIP1 phosphorylation. Interacts with SLC11A2/DMT1. May interact with phosphorylated EGFR. Interacts with KCNH2. Ubiquitinated by NEDD4 and ITCH. Also ubiquitinated by NEDD4L. Ubiquitination by NEDD4 or NEDD4L does not affect turnover. In terms of processing, undergoes transient tyrosine-phosphorylation following EGF stimulation, most probably catalyzed by SRC. Phosphorylation on Tyr-151, Tyr-171 and Tyr-177 are dependent on the phosphorylation on Tyr-167. Also phosphorylated by LYN and FYN. As to expression, expressed in brain, lung, heart, skeletal muscle, kidney, liver and placenta.

It is found in the endosome membrane. The protein resides in the golgi apparatus membrane. Its subcellular location is the endosome. The protein localises to the multivesicular body membrane. In terms of biological role, activates HECT domain-containing E3 ubiquitin-protein ligases, including ITCH, NEDD4, NEDD4L, SMURF2, WWP1 and WWP2, and consequently modulates the stability of their targets. As a result, may control many cellular processes. Recruits ITCH, NEDD4 and SMURF2 to endosomal membranes. Negatively regulates KCNH2 potassium channel activity by decreasing its cell-surface expression and interfering with channel maturation through recruitment of NEDD4L to the Golgi apparatus and multivesicular body where it mediates KCNH2 degradation. May modulate EGFR signaling. Together with NDFIP1, limits the cytokine signaling and expansion of effector Th2 T-cells by promoting degradation of JAK1, probably by ITCH- and NEDD4L-mediated ubiquitination. This chain is NEDD4 family-interacting protein 2 (NDFIP2), found in Homo sapiens (Human).